The primary structure comprises 957 residues: MTQTLSQLENRGAFIERHIGPDAAQQQEMLNAVGAESLNALTGQIVPKDIQLATPPQVGEAATEYAALAELKAIAGRNKRFTSYIGMGYTAVQLPPVILRNMLENPGWYTAYTPYQPEVSQGRLEALLNFQQVTLDLTGLDMASASLLDEATAAAEAMAMAKRVSKLKNANRFFVASDVHPQTLDVVRTRAETFGFDVIVDDAAKALDHQDVFGVLLQQVGTTGEIHDYSALITELKSRKVVVSVAADFMALVLLMAPGKQGADIVFGSAQRFGVPMGYGGPHAAFFAAKDEFKRSMPGRIIGVSKDAAGNTALRMAMQTREQHIRREKANSNICTSQVLLANIASLYAVYHGPVGLKRIANRIHRLTDILAAGLQQKGLKLRHAHYFDTLCVEVADKAAVLARAEAAEINLRSDIHNAVGITLDETTTRENVAQLFNVLLGGSHGLNIETLDKDVALDSRSIQQSMLRDDAILTHPVFNRYHSETEMMRYMHSLERKDLALNQAMIPLGSCTMKLNAAAEMIPITWPEFAELHPFCPPEQAEGYHQMISQLSDWLVKLTGYDAVCMQPNSGAQGEYAGLLAIRHYHESRNEGHRDICLIPASAHGTNPASAHMAGMQVVVVACDKNGNIDLDDLRAKAEQHAANLSCIMVTYPSTHGVYEETIREVCEVVHQFGGQVYLDGANMNAQVGITSPGFIGADVSHLNLHKTFCIPHGGGGPGMGPIGVKAHLAPFVPGHSVVQIEGMLTRQGAVSAAPFGSASILPISWMYIRMMGAEGLKQASQVAILNANYIASRLKDAYPVLYTGRDGRVAHECILDIRPLKEETGISELDIAKRLIDYGFHAPTMSFPVAGTLMVEPTESEGKAELDRFIDAMLAIRAEIDQVKAGVWPLEDNPLVNAPHIQSELVAEWAHPYSREVAVFPAGVADKYWPTVKRLDDVYGDRNLFCSCVPISDYQ.

An N6-(pyridoxal phosphate)lysine modification is found at lysine 708.

This sequence belongs to the GcvP family. In terms of assembly, the glycine cleavage system is composed of four proteins: P, T, L and H. The cofactor is pyridoxal 5'-phosphate.

It catalyses the reaction N(6)-[(R)-lipoyl]-L-lysyl-[glycine-cleavage complex H protein] + glycine + H(+) = N(6)-[(R)-S(8)-aminomethyldihydrolipoyl]-L-lysyl-[glycine-cleavage complex H protein] + CO2. The glycine cleavage system catalyzes the degradation of glycine. The P protein binds the alpha-amino group of glycine through its pyridoxal phosphate cofactor; CO(2) is released and the remaining methylamine moiety is then transferred to the lipoamide cofactor of the H protein. This is Glycine dehydrogenase (decarboxylating) from Salmonella heidelberg (strain SL476).